We begin with the raw amino-acid sequence, 207 residues long: Thiamine-phosphate synthase (207 aa).

4-amino-2-methyl-5-(diphosphooxymethyl)pyrimidine is bound by residues 36-40 (QMRIK) and aspartate 68. Mg(2+) contacts are provided by aspartate 69 and aspartate 88. 4-amino-2-methyl-5-(diphosphooxymethyl)pyrimidine is bound at residue serine 106. 132-134 (TKT) serves as a coordination point for 2-[(2R,5Z)-2-carboxy-4-methylthiazol-5(2H)-ylidene]ethyl phosphate. Lysine 135 lines the 4-amino-2-methyl-5-(diphosphooxymethyl)pyrimidine pocket. 2-[(2R,5Z)-2-carboxy-4-methylthiazol-5(2H)-ylidene]ethyl phosphate contacts are provided by residues glycine 162 and 182 to 183 (IS).

It belongs to the thiamine-phosphate synthase family. Mg(2+) serves as cofactor.

It carries out the reaction 2-[(2R,5Z)-2-carboxy-4-methylthiazol-5(2H)-ylidene]ethyl phosphate + 4-amino-2-methyl-5-(diphosphooxymethyl)pyrimidine + 2 H(+) = thiamine phosphate + CO2 + diphosphate. The catalysed reaction is 2-(2-carboxy-4-methylthiazol-5-yl)ethyl phosphate + 4-amino-2-methyl-5-(diphosphooxymethyl)pyrimidine + 2 H(+) = thiamine phosphate + CO2 + diphosphate. It catalyses the reaction 4-methyl-5-(2-phosphooxyethyl)-thiazole + 4-amino-2-methyl-5-(diphosphooxymethyl)pyrimidine + H(+) = thiamine phosphate + diphosphate. The protein operates within cofactor biosynthesis; thiamine diphosphate biosynthesis; thiamine phosphate from 4-amino-2-methyl-5-diphosphomethylpyrimidine and 4-methyl-5-(2-phosphoethyl)-thiazole: step 1/1. In terms of biological role, condenses 4-methyl-5-(beta-hydroxyethyl)thiazole monophosphate (THZ-P) and 2-methyl-4-amino-5-hydroxymethyl pyrimidine pyrophosphate (HMP-PP) to form thiamine monophosphate (TMP). The chain is Thiamine-phosphate synthase from Pyrococcus furiosus (strain ATCC 43587 / DSM 3638 / JCM 8422 / Vc1).